A 543-amino-acid polypeptide reads, in one-letter code: Chaperonin GroEL (543 aa).

Residues 29 to 32 (TLGP), lysine 50, 86 to 90 (DGTTT), glycine 415, and aspartate 495 contribute to the ATP site.

It belongs to the chaperonin (HSP60) family. Forms a cylinder of 14 subunits composed of two heptameric rings stacked back-to-back. Interacts with the co-chaperonin GroES.

The protein localises to the cytoplasm. It carries out the reaction ATP + H2O + a folded polypeptide = ADP + phosphate + an unfolded polypeptide.. Functionally, together with its co-chaperonin GroES, plays an essential role in assisting protein folding. The GroEL-GroES system forms a nano-cage that allows encapsulation of the non-native substrate proteins and provides a physical environment optimized to promote and accelerate protein folding. The polypeptide is Chaperonin GroEL (Flavobacterium johnsoniae (strain ATCC 17061 / DSM 2064 / JCM 8514 / BCRC 14874 / CCUG 350202 / NBRC 14942 / NCIMB 11054 / UW101) (Cytophaga johnsonae)).